Consider the following 429-residue polypeptide: Glutamate-1-semialdehyde 2,1-aminomutase 2 (429 aa).

K267 is subject to N6-(pyridoxal phosphate)lysine.

This sequence belongs to the class-III pyridoxal-phosphate-dependent aminotransferase family. HemL subfamily. In terms of assembly, homodimer. Pyridoxal 5'-phosphate serves as cofactor.

Its subcellular location is the cytoplasm. It catalyses the reaction (S)-4-amino-5-oxopentanoate = 5-aminolevulinate. The protein operates within porphyrin-containing compound metabolism; protoporphyrin-IX biosynthesis; 5-aminolevulinate from L-glutamyl-tRNA(Glu): step 2/2. This Bacillus subtilis (strain 168) protein is Glutamate-1-semialdehyde 2,1-aminomutase 2 (gsaB).